Consider the following 590-residue polypeptide: V-type ATP synthase alpha chain (590 aa).

231-238 (GPFGSGKT) provides a ligand contact to ATP.

Belongs to the ATPase alpha/beta chains family.

It catalyses the reaction ATP + H2O + 4 H(+)(in) = ADP + phosphate + 5 H(+)(out). Produces ATP from ADP in the presence of a proton gradient across the membrane. The V-type alpha chain is a catalytic subunit. This chain is V-type ATP synthase alpha chain, found in Clostridium botulinum (strain ATCC 19397 / Type A).